The chain runs to 511 residues: Aldehyde dehydrogenase 2, mitochondrial (511 aa).

A mitochondrion-targeting transit peptide spans 1 to 21 (MSKSKTKTDKRNQSSLSRIKL). The interval 72 to 92 (VSEKSQHDSTEEDITQVSEKS) is disordered. 274-279 (GSTLVG) provides a ligand contact to NAD(+). E297 (proton acceptor) is an active-site residue. C331 serves as the catalytic Nucleophile.

Belongs to the aldehyde dehydrogenase family.

Its subcellular location is the mitochondrion matrix. The enzyme catalyses an aldehyde + NAD(+) + H2O = a carboxylate + NADH + 2 H(+). It functions in the pathway alcohol metabolism; ethanol degradation; acetate from ethanol: step 2/2. The polypeptide is Aldehyde dehydrogenase 2, mitochondrial (ALD2) (Saccharomyces cerevisiae (Baker's yeast)).